A 626-amino-acid chain; its full sequence is Chaperone protein DnaK (626 aa).

The residue at position 175 (Thr175) is a Phosphothreonine; by autocatalysis. Disordered stretches follow at residues 469–488 (DKGTGKEQSMTITGGSGLPK), 498–517 (AEAHEAEDKKRKEDAETRNQ), and 583–626 (AQQG…KDNK). The span at 498–516 (AEAHEAEDKKRKEDAETRN) shows a compositional bias: basic and acidic residues. Over residues 609–626 (SDDDVVDAEVVDDDKDNK) the composition is skewed to acidic residues.

The protein belongs to the heat shock protein 70 family.

Its function is as follows. Acts as a chaperone. This is Chaperone protein DnaK from Bifidobacterium adolescentis (strain ATCC 15703 / DSM 20083 / NCTC 11814 / E194a).